The following is a 354-amino-acid chain: Glutamine synthetase cytosolic isozyme 1-3 (354 aa).

Serine 2 carries the post-translational modification N-acetylserine. Residues serine 2 and serine 48 each carry the phosphoserine modification. The GS beta-grasp domain maps to 19 to 99 (IIAEYIWIGG…VMCDAYTPAG (81 aa)). A GS catalytic domain is found at 106–354 (KRHNAAKIFS…SMIAETTILG (249 aa)).

It belongs to the glutamine synthetase family. In terms of assembly, homooctamer. Expressed in the pericycle in the region of mature root.

The protein localises to the cytoplasm. It carries out the reaction L-glutamate + NH4(+) + ATP = L-glutamine + ADP + phosphate + H(+). Functionally, low-affinity glutamine synthetase. May contribute to the homeostatic control of glutamine synthesis in roots. This Arabidopsis thaliana (Mouse-ear cress) protein is Glutamine synthetase cytosolic isozyme 1-3 (GLN1-3).